The following is a 212-amino-acid chain: Ribosomal RNA large subunit methyltransferase E (212 aa).

The segment at 1-26 (MPAERPSVSQKPKNPYKRPDAFTKAA) is disordered. Residues Gly-63, Trp-65, Asp-83, Asp-101, and Asp-122 each coordinate S-adenosyl-L-methionine. Lys-162 serves as the catalytic Proton acceptor.

This sequence belongs to the class I-like SAM-binding methyltransferase superfamily. RNA methyltransferase RlmE family.

The protein localises to the cytoplasm. It carries out the reaction uridine(2552) in 23S rRNA + S-adenosyl-L-methionine = 2'-O-methyluridine(2552) in 23S rRNA + S-adenosyl-L-homocysteine + H(+). In terms of biological role, specifically methylates the uridine in position 2552 of 23S rRNA at the 2'-O position of the ribose in the fully assembled 50S ribosomal subunit. The chain is Ribosomal RNA large subunit methyltransferase E from Sorangium cellulosum (strain So ce56) (Polyangium cellulosum (strain So ce56)).